Reading from the N-terminus, the 184-residue chain is Ribosome-recycling factor (184 aa).

Belongs to the RRF family.

Its subcellular location is the cytoplasm. In terms of biological role, responsible for the release of ribosomes from messenger RNA at the termination of protein biosynthesis. May increase the efficiency of translation by recycling ribosomes from one round of translation to another. This Borrelia hermsii (strain HS1 / DAH) protein is Ribosome-recycling factor.